A 236-amino-acid polypeptide reads, in one-letter code: Purine nucleoside phosphorylase DeoD-type 2 (236 aa).

His5 lines the a purine D-ribonucleoside pocket. Residues Gly21, Arg25, Arg44, and 88–91 (RVGS) contribute to the phosphate site. Residues 180-182 (DME) and 204-205 (SD) contribute to the a purine D-ribonucleoside site. The active-site Proton donor is Asp205.

The protein belongs to the PNP/UDP phosphorylase family. In terms of assembly, homohexamer; trimer of homodimers.

It catalyses the reaction a purine D-ribonucleoside + phosphate = a purine nucleobase + alpha-D-ribose 1-phosphate. It carries out the reaction a purine 2'-deoxy-D-ribonucleoside + phosphate = a purine nucleobase + 2-deoxy-alpha-D-ribose 1-phosphate. Its function is as follows. Catalyzes the reversible phosphorolytic breakdown of the N-glycosidic bond in the beta-(deoxy)ribonucleoside molecules, with the formation of the corresponding free purine bases and pentose-1-phosphate. This Photobacterium profundum (strain SS9) protein is Purine nucleoside phosphorylase DeoD-type 2.